The following is a 911-amino-acid chain: Transcription factor E2F7 (911 aa).

Phosphoserine is present on serine 94. Residues 141–210 mediate DNA binding; sequence RKQKSLGLLC…VAKNQYSWHG (70 aa). Disordered regions lie at residues 239–281, 409–433, and 565–706; these read QKEL…ANSR, SFNS…PYRQ, and SPGS…SPLQ. The segment covering 243–257 has biased composition (basic and acidic residues); the sequence is NPIDHKSGERRRDGC. Residues 281–366 mediate DNA binding; sequence RKDKSLKIMS…GRKPAFKWIG (86 aa). Serine 409 carries the post-translational modification Phosphoserine. The segment covering 415-424 has biased composition (basic and acidic residues); it reads ASERTQRKVN. The segment covering 566-579 has biased composition (gly residues); the sequence is PGSGSGSGSVGGGS. Over residues 599 to 621 the composition is skewed to basic and acidic residues; that stretch reads ERRLQEEEEEPATKRQCRDHEDG. Residues 669–687 show a composition bias toward polar residues; sequence KATTNGFVSSEWGNPCSNT. Basic and acidic residues predominate over residues 688-698; it reads EIEKPSEENES. Serine 840 carries the post-translational modification Phosphoserine. Residues 873-911 form a disordered region; the sequence is FFKTPGSLGDPVLRRKERNQSRSSSSAQRRLEISSGGTD.

Belongs to the E2F/DP family. As to quaternary structure, homodimer and heterodimer: mainly forms homodimers and, to a lesser extent, heterodimers with E2F8. Dimerization is important for DNA-binding. Interacts with HIF1A. Interacts with MN1.

Its subcellular location is the nucleus. In terms of biological role, atypical E2F transcription factor that participates in various processes such as angiogenesis, polyploidization of specialized cells and DNA damage response. Mainly acts as a transcription repressor that binds DNA independently of DP proteins and specifically recognizes the E2 recognition site 5'-TTTC[CG]CGC-3'. Directly represses transcription of classical E2F transcription factors such as E2F1. Acts as a regulator of S-phase by recognizing and binding the E2-related site 5'-TTCCCGCC-3' and mediating repression of G1/S-regulated genes. Plays a key role in polyploidization of cells in placenta and liver by regulating the endocycle, probably by repressing genes promoting cytokinesis and antagonizing action of classical E2F proteins (E2F1, E2F2 and/or E2F3). Required for placental development by promoting polyploidization of trophoblast giant cells. Also involved in DNA damage response: up-regulated by p53/TP53 following genotoxic stress and acts as a downstream effector of p53/TP53-dependent repression by mediating repression of indirect p53/TP53 target genes involved in DNA replication. Acts as a promoter of sprouting angiogenesis, possibly by acting as a transcription activator: associates with HIF1A, recognizes and binds the VEGFA promoter, which is different from canonical E2 recognition site, and activates expression of the VEGFA gene. Acts as a negative regulator of keratinocyte differentiation. The polypeptide is Transcription factor E2F7 (E2F7) (Bos taurus (Bovine)).